Reading from the N-terminus, the 119-residue chain is Large ribosomal subunit protein uL18 (119 aa).

It belongs to the universal ribosomal protein uL18 family. Part of the 50S ribosomal subunit; part of the 5S rRNA/L5/L18/L25 subcomplex. Contacts the 5S and 23S rRNAs.

This is one of the proteins that bind and probably mediate the attachment of the 5S RNA into the large ribosomal subunit, where it forms part of the central protuberance. The protein is Large ribosomal subunit protein uL18 of Anaeromyxobacter dehalogenans (strain 2CP-C).